Reading from the N-terminus, the 214-residue chain is Thiamine import ATP-binding protein ThiQ (214 aa).

Residues 2-212 form the ABC transporter domain; that stretch reads IKLNTIFDYP…KNGQATEREI (211 aa). Residue 31 to 38 participates in ATP binding; that stretch reads GESGAGKS.

The protein belongs to the ABC transporter superfamily. Thiamine importer (TC 3.A.1.19.1) family. As to quaternary structure, the complex is composed of two ATP-binding proteins (ThiQ), two transmembrane proteins (ThiP) and a solute-binding protein (ThiB).

Its subcellular location is the cell inner membrane. The enzyme catalyses thiamine(out) + ATP + H2O = thiamine(in) + ADP + phosphate + H(+). Part of the ABC transporter complex ThiBPQ involved in thiamine import. Responsible for energy coupling to the transport system. The sequence is that of Thiamine import ATP-binding protein ThiQ from Histophilus somni (strain 129Pt) (Haemophilus somnus).